Consider the following 530-residue polypeptide: Chaperonin GroEL 2 (530 aa).

Residues 30–33, lysine 51, 87–91, glycine 415, 479–481, and aspartate 495 each bind ATP; these read TLGP, DGTTT, and NAA.

The protein belongs to the chaperonin (HSP60) family. In terms of assembly, forms a cylinder of 14 subunits composed of two heptameric rings stacked back-to-back. Interacts with the co-chaperonin GroES.

It localises to the cytoplasm. The enzyme catalyses ATP + H2O + a folded polypeptide = ADP + phosphate + an unfolded polypeptide.. In terms of biological role, together with its co-chaperonin GroES, plays an essential role in assisting protein folding. The GroEL-GroES system forms a nano-cage that allows encapsulation of the non-native substrate proteins and provides a physical environment optimized to promote and accelerate protein folding. The chain is Chaperonin GroEL 2 from Vibrio cholerae serotype O1 (strain ATCC 39315 / El Tor Inaba N16961).